The chain runs to 242 residues: tRNA (guanine-N(1)-)-methyltransferase (242 aa).

Residues Gly-111 and 130–135 (IGDYVL) contribute to the S-adenosyl-L-methionine site.

This sequence belongs to the RNA methyltransferase TrmD family. As to quaternary structure, homodimer.

The protein resides in the cytoplasm. It carries out the reaction guanosine(37) in tRNA + S-adenosyl-L-methionine = N(1)-methylguanosine(37) in tRNA + S-adenosyl-L-homocysteine + H(+). Functionally, specifically methylates guanosine-37 in various tRNAs. The protein is tRNA (guanine-N(1)-)-methyltransferase of Onion yellows phytoplasma (strain OY-M).